Here is a 69-residue protein sequence, read N- to C-terminus: Brevinin-1Pb (69 aa).

Positions 1-20 (MFTLNKFLLLLFFLGTINLS) are cleaved as a signal peptide. Residues 21–43 (FCEEENAEEERIDEPDETDVEVE) constitute a propeptide that is removed on maturation. Residues cysteine 63 and cysteine 69 are joined by a disulfide bond.

In terms of tissue distribution, expressed by the skin glands.

Its subcellular location is the secreted. Antibacterial activity against Gram-positive bacterium S.aureus and Gram-negative bacterium E.coli. Has activity against C.albicans. The chain is Brevinin-1Pb from Lithobates pipiens (Northern leopard frog).